Here is a 105-residue protein sequence, read N- to C-terminus: Nitrogenase-stabilizing/protective protein NifW (105 aa).

The protein belongs to the NifW family. Homotrimer; associates with NifD.

Its function is as follows. May protect the nitrogenase Fe-Mo protein from oxidative damage. The chain is Nitrogenase-stabilizing/protective protein NifW from Rhodospirillum centenum (strain ATCC 51521 / SW).